The following is a 1287-amino-acid chain: Rho GTPase-activating protein 33 (1287 aa).

The disordered stretch occupies residues Met1–Arg40. Residue Ser8 is modified to Phosphoserine. The PX; atypical domain occupies Phe59–Leu168. The region spanning Pro186–Glu248 is the SH3 domain. The 196-residue stretch at Cys315–Phe510 folds into the Rho-GAP domain. 6 disordered regions span residues Arg551–Ala792, Ala813–Leu832, Lys859–Pro1030, Gly1056–Pro1075, Gly1090–Phe1134, and Pro1146–Cys1287. A compositionally biased stretch (low complexity) spans Thr558 to Pro571. Ser570 is subject to Phosphoserine. Over residues Ala572–Arg584 the composition is skewed to basic and acidic residues. Polar residues predominate over residues Ser622–Ser645. Ser636 carries the phosphoserine modification. The span at Ala672–Ser709 shows a compositional bias: low complexity. Ser727 carries the phosphoserine modification. Residues Pro752–Pro766 show a composition bias toward pro residues. Composition is skewed to low complexity over residues Ala813 to Gly829 and Pro896 to Glu919. Polar residues-rich tracts occupy residues Arg972–Arg981 and Ser1019–Pro1028. Tyr1169 carries the post-translational modification Phosphotyrosine. Residues Gly1175 to Pro1189 are compositionally biased toward low complexity. The residue at position 1244 (Arg1244) is an Omega-N-methylarginine. Residues Ser1274–Cys1287 are compositionally biased toward polar residues.

It belongs to the PX domain-containing GAP family. In terms of assembly, specifically interacts with CDC42 and RHOQ/TC10 through its Rho-GAP domain. Interacts with NEK6.

Functionally, may be involved in several stages of intracellular trafficking. Could play an important role in the regulation of glucose transport by insulin. May act as a downstream effector of RHOQ/TC10 in the regulation of insulin-stimulated glucose transport. The chain is Rho GTPase-activating protein 33 (ARHGAP33) from Homo sapiens (Human).